A 247-amino-acid chain; its full sequence is Small ribosomal subunit protein uS3 (247 aa).

The 73-residue stretch at 39 to 111 folds into the KH type-2 domain; the sequence is IYDFFDKKVR…NISIQVIELK (73 aa). A disordered region spans residues 221 to 247; it reads EEMDLLNAPKDRRVRRGGERHASTKKN. Residues 236-247 are compositionally biased toward basic and acidic residues; the sequence is RGGERHASTKKN.

It belongs to the universal ribosomal protein uS3 family. Part of the 30S ribosomal subunit. Forms a tight complex with proteins S10 and S14.

Functionally, binds the lower part of the 30S subunit head. Binds mRNA in the 70S ribosome, positioning it for translation. In Metamycoplasma arthritidis (strain 158L3-1) (Mycoplasma arthritidis), this protein is Small ribosomal subunit protein uS3.